Reading from the N-terminus, the 389-residue chain is Succinate--CoA ligase [ADP-forming] subunit beta (389 aa).

An ATP-grasp domain is found at 9 to 244 (KKLFADYGLP…LTQEDPREAE (236 aa)). ATP-binding positions include K46, 53 to 55 (GRG), E99, A102, and E107. Positions 199 and 213 each coordinate Mg(2+). Substrate-binding positions include N264 and 321-323 (GIV).

Belongs to the succinate/malate CoA ligase beta subunit family. Heterotetramer of two alpha and two beta subunits. Requires Mg(2+) as cofactor.

The catalysed reaction is succinate + ATP + CoA = succinyl-CoA + ADP + phosphate. The enzyme catalyses GTP + succinate + CoA = succinyl-CoA + GDP + phosphate. The protein operates within carbohydrate metabolism; tricarboxylic acid cycle; succinate from succinyl-CoA (ligase route): step 1/1. Functionally, succinyl-CoA synthetase functions in the citric acid cycle (TCA), coupling the hydrolysis of succinyl-CoA to the synthesis of either ATP or GTP and thus represents the only step of substrate-level phosphorylation in the TCA. The beta subunit provides nucleotide specificity of the enzyme and binds the substrate succinate, while the binding sites for coenzyme A and phosphate are found in the alpha subunit. The polypeptide is Succinate--CoA ligase [ADP-forming] subunit beta (Histophilus somni (strain 2336) (Haemophilus somnus)).